The chain runs to 388 residues: Lipid-A-disaccharide synthase (388 aa).

Belongs to the LpxB family.

The catalysed reaction is a lipid X + a UDP-2-N,3-O-bis[(3R)-3-hydroxyacyl]-alpha-D-glucosamine = a lipid A disaccharide + UDP + H(+). It participates in bacterial outer membrane biogenesis; LPS lipid A biosynthesis. Its function is as follows. Condensation of UDP-2,3-diacylglucosamine and 2,3-diacylglucosamine-1-phosphate to form lipid A disaccharide, a precursor of lipid A, a phosphorylated glycolipid that anchors the lipopolysaccharide to the outer membrane of the cell. The protein is Lipid-A-disaccharide synthase of Burkholderia pseudomallei (strain 1710b).